The chain runs to 154 residues: MRCPFCGNENTRVIDTRAAEDGFAIKRRRECENCSKRFTTYERLDDRPLIVVKKDGSKQLFDKHKIYTGLLKACEKRPIAESKLLEIAEEIERELKNRLEQEVTSLEIGEMVMSRLKKLDEVAYVRFASVYRQFKDVNSFLEELKKLLNGGENS.

Residues 3 to 34 (CPFCGNENTRVIDTRAAEDGFAIKRRRECENC) fold into a zinc finger. An ATP-cone domain is found at 49–139 (LIVVKKDGSK…VYRQFKDVNS (91 aa)).

This sequence belongs to the NrdR family. Requires Zn(2+) as cofactor.

Functionally, negatively regulates transcription of bacterial ribonucleotide reductase nrd genes and operons by binding to NrdR-boxes. This chain is Transcriptional repressor NrdR, found in Carboxydothermus hydrogenoformans (strain ATCC BAA-161 / DSM 6008 / Z-2901).